The chain runs to 387 residues: NAD(P)H oxidoreductase RTN4IP1, mitochondrial (387 aa).

Residues 1 to 27 (MLMCRRWLVCSLRCHYRSFSFSAARRT) constitute a mitochondrion transit peptide. One can recognise an Enoyl reductase (ER) domain in the interval 38 to 379 (GKNDVLRFTK…QGHARGKTVV (342 aa)). S200, G202, V203, S223, Y241, L286, G327, F329, H372, A373, and R374 together coordinate NADPH.

Belongs to the zinc-containing alcohol dehydrogenase family. Quinone oxidoreductase subfamily.

The protein localises to the mitochondrion matrix. It is found in the mitochondrion outer membrane. It carries out the reaction a 3-demethylubiquinone + NADH + 2 H(+) = a 3-demethylubiquinol + NAD(+). The enzyme catalyses a 3-demethylubiquinone + NADPH + 2 H(+) = a 3-demethylubiquinol + NADP(+). The catalysed reaction is 3-demethylubiquinone-10 + NADH + 2 H(+) = 3-demethylubiquinol-10 + NAD(+). It catalyses the reaction 3-demethylubiquinone-10 + NADPH + 2 H(+) = 3-demethylubiquinol-10 + NADP(+). It participates in cofactor biosynthesis; ubiquinone biosynthesis. Functionally, NAD(P)H oxidoreductase involved in the ubiquinone biosynthetic pathway. Required for the O-methyltransferase activity of COQ3. Able to catalyze the oxidoreduction of 3-demethylubiquinone into 3-demethylubiquinol in vitro. However, it is unclear if 3-demethylubiquinone constitutes a substrate in vivo. May also play a role in the regulation of retinal ganglion cell (RGC) neurite outgrowth, and hence in the development of the inner retina and optic nerve. This chain is NAD(P)H oxidoreductase RTN4IP1, mitochondrial (rtn4ip1), found in Danio rerio (Zebrafish).